Consider the following 707-residue polypeptide: SPX domain-containing membrane protein At4g11810 (707 aa).

Positions 2–145 constitute an SPX domain; it reads VAFGKKLKER…GYRFTNYYVK (144 aa). Helical transmembrane passes span 252-272, 283-303, 320-340, 342-361, 380-400, and 416-436; these read FMSLLLNLANTFLYMVNTYII, LGAAATVCGVVIGAMAVAQLF, LIFSSIVLFFGNLLYALAYDF, SLALLLIGRLFCGFGSARAV, AGFVSASALGMACGPALAGLL, and LPGWVMAVAWLLYLVWLAISF. Acidic residues predominate over residues 481–498; sequence EETEHDEEDDGDGSEESS. Positions 481 to 503 are disordered; it reads EETEHDEEDDGDGSEESSDDSRK. Helical transmembrane passes span 523 to 543, 557 to 577, 586 to 606, 614 to 634, and 679 to 699; these read LLIYFMLKYAMEILLSESSVV, IFLFCLGLTVLPVNLVVGSYI, ILLASEIMVCIGIVLSFHVVI, VISGFIMFVSAEVLEGVNLSL, and MLLNVTLLPSLIICVLSILAT.

The protein belongs to the major facilitator superfamily.

It localises to the membrane. This is SPX domain-containing membrane protein At4g11810 from Arabidopsis thaliana (Mouse-ear cress).